We begin with the raw amino-acid sequence, 513 residues long: Melianol synthase CYP71BQ4 (513 aa).

The helical transmembrane segment at 10–30 threads the bilayer; sequence MLHLPSLPVLLSFLLFLLMLI. Residue C451 participates in heme binding.

The protein belongs to the cytochrome P450 family. Heme is required as a cofactor. As to expression, accumulates in mature fruits and in juice vesicles.

The protein localises to the membrane. The enzyme catalyses dihydroniloticin + 2 reduced [NADPH--hemoprotein reductase] + 2 O2 = melianol + 2 oxidized [NADPH--hemoprotein reductase] + 3 H2O + 2 H(+). It functions in the pathway secondary metabolite biosynthesis; terpenoid biosynthesis. Its function is as follows. Monooxygenase involved in the biosynthesis of limonoids triterpene natural products such as limonin, a compound with insecticidal activity responsible for the bitter taste in citrus. Catalyzes the conversion of dihydroniloticin to the protolimonoid melianol. This is Melianol synthase CYP71BQ4 from Citrus sinensis (Sweet orange).